Here is a 464-residue protein sequence, read N- to C-terminus: Glutamate decarboxylase beta (464 aa).

Lys275 carries the post-translational modification N6-(pyridoxal phosphate)lysine.

The protein belongs to the group II decarboxylase family. Requires pyridoxal 5'-phosphate as cofactor.

It catalyses the reaction L-glutamate + H(+) = 4-aminobutanoate + CO2. Functionally, converts internalized glutamate to GABA and increases the internal pH. Involved in glutamate-dependent acid resistance in gastric fluid. This chain is Glutamate decarboxylase beta (gadB), found in Listeria monocytogenes serovar 1/2a (strain ATCC BAA-679 / EGD-e).